Consider the following 847-residue polypeptide: uncharacterized protein (847 aa).

Over residues Thr-116–Thr-126 the composition is skewed to polar residues. Disordered regions lie at residues Thr-116–Glu-153, Leu-208–Pro-245, and Asp-361–Ile-392. Positions Ile-128–Ala-145 are enriched in basic and acidic residues. The segment covering Ser-368 to Leu-378 has biased composition (polar residues).

This is an uncharacterized protein from Caenorhabditis elegans.